Reading from the N-terminus, the 1105-residue chain is Lysylphosphatidylglycerol biosynthesis bifunctional protein LysX (1105 aa).

The interval 1–603 (MTVTKPRSVQ…LLHHDGSAPD (603 aa)) is phosphatidylglycerol lysyltransferase. The next 7 membrane-spanning stretches (helical) occupy residues 20 to 40 (VPAA…LASI), 62 to 82 (FPDT…ALAA), 86 to 106 (IAWL…AADI), 117 to 137 (FGEN…VLGY), 154 to 174 (AVLV…VELF), 186 to 203 (YVAN…DLFT), and 208 to 228 (VFLN…ATIV). The interval 604–1105 (VSGLRQSAIA…TLPFPLAKPH (502 aa)) is lysine--tRNA ligase. Asp-1017 and Glu-1024 together coordinate Mg(2+).

In the N-terminal section; belongs to the LPG synthetase family. It in the C-terminal section; belongs to the class-II aminoacyl-tRNA synthetase family. Mg(2+) serves as cofactor.

The protein resides in the cell membrane. It carries out the reaction tRNA(Lys) + L-lysine + ATP = L-lysyl-tRNA(Lys) + AMP + diphosphate. The catalysed reaction is L-lysyl-tRNA(Lys) + a 1,2-diacyl-sn-glycero-3-phospho-(1'-sn-glycerol) = a 1,2-diacyl-sn-glycero-3-phospho-1'-(3'-O-L-lysyl)-sn-glycerol + tRNA(Lys). In terms of biological role, catalyzes the production of L-lysyl-tRNA(Lys)transfer and the transfer of a lysyl group from L-lysyl-tRNA(Lys) to membrane-bound phosphatidylglycerol (PG), which produces lysylphosphatidylglycerol (LPG), one of the components of the bacterial membrane with a positive net charge. LPG synthesis contributes to the resistance to cationic antimicrobial peptides (CAMPs) and likely protects M.tuberculosis against the CAMPs produced by competiting microorganisms (bacteriocins). In fact, the modification of anionic phosphatidylglycerol with positively charged L-lysine results in repulsion of the peptides. This is Lysylphosphatidylglycerol biosynthesis bifunctional protein LysX (lysX) from Mycobacterium marinum (strain ATCC BAA-535 / M).